A 156-amino-acid chain; its full sequence is Small ribosomal subunit protein uS7 (156 aa).

This sequence belongs to the universal ribosomal protein uS7 family. Part of the 30S ribosomal subunit. Contacts proteins S9 and S11.

Its function is as follows. One of the primary rRNA binding proteins, it binds directly to 16S rRNA where it nucleates assembly of the head domain of the 30S subunit. Is located at the subunit interface close to the decoding center, probably blocks exit of the E-site tRNA. The sequence is that of Small ribosomal subunit protein uS7 from Macrococcus caseolyticus (strain JCSC5402) (Macrococcoides caseolyticum).